A 365-amino-acid chain; its full sequence is Sesquiterpene synthase 3 (365 aa).

4 residues coordinate Mg(2+): Asp117, Asn253, Ser257, and Glu261. The DDXXD motif motif lies at 117–121; that stretch reads DDWSD. Residues 253–261 carry the NSE/DTE motif motif; that stretch reads NDILSYNRE. (2E,6E)-farnesyl diphosphate is bound by residues Arg341 and Tyr342.

This sequence belongs to the terpene synthase family. Mg(2+) is required as a cofactor.

The catalysed reaction is (2E,6E)-farnesyl diphosphate = delta-cadinene + diphosphate. Its function is as follows. Terpene cyclase that catalyzes the cyclization of farnesyl diphosphate (FPP) to various sesquiterpenes, including beta-elemene gamma-cadinene, delta-cadinene, and alpha-cadinene. The polypeptide is Sesquiterpene synthase 3 (Postia placenta (strain ATCC 44394 / Madison 698-R) (Brown rot fungus)).